Reading from the N-terminus, the 885-residue chain is DNA mismatch repair protein MutS (885 aa).

Residue 626 to 633 (GPNMGGKS) coordinates ATP.

It belongs to the DNA mismatch repair MutS family.

Functionally, this protein is involved in the repair of mismatches in DNA. It is possible that it carries out the mismatch recognition step. This protein has a weak ATPase activity. This is DNA mismatch repair protein MutS from Burkholderia cenocepacia (strain HI2424).